The sequence spans 800 residues: Phenylalanine--tRNA ligase beta subunit (800 aa).

Residues 39–154 (TKDIKKLVVG…EAVKPGTDAL (116 aa)) enclose the tRNA-binding domain. In terms of domain architecture, B5 spans 408-483 (SFVTPIKITA…RIYGYDDIPS (76 aa)). Residues D461, D467, E470, and E471 each coordinate Mg(2+). The region spanning 708 to 800 (PRFPGVTRDI…ALKKHGAIIR (93 aa)) is the FDX-ACB domain.

This sequence belongs to the phenylalanyl-tRNA synthetase beta subunit family. Type 1 subfamily. In terms of assembly, tetramer of two alpha and two beta subunits. Mg(2+) is required as a cofactor.

The protein resides in the cytoplasm. It carries out the reaction tRNA(Phe) + L-phenylalanine + ATP = L-phenylalanyl-tRNA(Phe) + AMP + diphosphate + H(+). This is Phenylalanine--tRNA ligase beta subunit from Staphylococcus epidermidis (strain ATCC 35984 / DSM 28319 / BCRC 17069 / CCUG 31568 / BM 3577 / RP62A).